A 372-amino-acid polypeptide reads, in one-letter code: Flap endonuclease 1 (372 aa).

Residues 1 to 105 (MGVKGLNQLI…GELEKRLLRR (105 aa)) are N-domain. Asp-34 is a Mg(2+) binding site. DNA is bound by residues Arg-47 and Arg-71. Mg(2+) is bound by residues Asp-87, Glu-159, Glu-161, Asp-180, and Asp-182. The segment at 123–254 (EVLKFEKRLV…ATAFKLIKEH (132 aa)) is I-domain. Glu-159 provides a ligand contact to DNA. Residues Gly-232 and Asp-234 each coordinate DNA. Asp-234 is a binding site for Mg(2+). The interaction with PCNA stretch occupies residues 339-347 (VQGRLDGFF). A compositionally biased stretch (basic and acidic residues) spans 353 to 366 (DDKKRKADPKESKA). The segment at 353–372 (DDKKRKADPKESKASKKKKK) is disordered.

The protein belongs to the XPG/RAD2 endonuclease family. FEN1 subfamily. Interacts with PCNA. Three molecules of RAD27 bind to one PCNA trimer with each molecule binding to one PCNA monomer. PCNA stimulates the nuclease activity without altering cleavage specificity. Mg(2+) is required as a cofactor. In terms of processing, phosphorylated. Phosphorylation upon DNA damage induces relocalization to the nuclear plasma.

Its subcellular location is the nucleus. It localises to the nucleolus. The protein resides in the nucleoplasm. It is found in the mitochondrion. In terms of biological role, structure-specific nuclease with 5'-flap endonuclease and 5'-3' exonuclease activities involved in DNA replication and repair. During DNA replication, cleaves the 5'-overhanging flap structure that is generated by displacement synthesis when DNA polymerase encounters the 5'-end of a downstream Okazaki fragment. It enters the flap from the 5'-end and then tracks to cleave the flap base, leaving a nick for ligation. Also involved in the long patch base excision repair (LP-BER) pathway, by cleaving within the apurinic/apyrimidinic (AP) site-terminated flap. Acts as a genome stabilization factor that prevents flaps from equilibrating into structures that lead to duplications and deletions. Also possesses 5'-3' exonuclease activity on nicked or gapped double-stranded DNA, and exhibits RNase H activity. Also involved in replication and repair of rDNA and in repairing mitochondrial DNA. This Candida albicans (strain WO-1) (Yeast) protein is Flap endonuclease 1.